The chain runs to 161 residues: Small ribosomal subunit protein uS9 (161 aa).

This sequence belongs to the universal ribosomal protein uS9 family.

This is Small ribosomal subunit protein uS9 from Rickettsia canadensis (strain McKiel).